We begin with the raw amino-acid sequence, 119 residues long: Large ribosomal subunit protein bL20 (119 aa).

The protein belongs to the bacterial ribosomal protein bL20 family.

In terms of biological role, binds directly to 23S ribosomal RNA and is necessary for the in vitro assembly process of the 50S ribosomal subunit. It is not involved in the protein synthesizing functions of that subunit. The chain is Large ribosomal subunit protein bL20 from Rhodopseudomonas palustris (strain ATCC BAA-98 / CGA009).